We begin with the raw amino-acid sequence, 155 residues long: Ribosomal RNA large subunit methyltransferase H (155 aa).

Residues L73, G104, and 123 to 128 (LSALTL) each bind S-adenosyl-L-methionine.

The protein belongs to the RNA methyltransferase RlmH family. Homodimer.

The protein localises to the cytoplasm. It carries out the reaction pseudouridine(1915) in 23S rRNA + S-adenosyl-L-methionine = N(3)-methylpseudouridine(1915) in 23S rRNA + S-adenosyl-L-homocysteine + H(+). In terms of biological role, specifically methylates the pseudouridine at position 1915 (m3Psi1915) in 23S rRNA. The sequence is that of Ribosomal RNA large subunit methyltransferase H from Saccharophagus degradans (strain 2-40 / ATCC 43961 / DSM 17024).